The following is a 52-amino-acid chain: Insulin (52 aa).

Cystine bridges form between Cys9–Cys38, Cys21–Cys51, and Cys37–Cys42.

This sequence belongs to the insulin family. In terms of assembly, heterodimer of a B chain and an A chain linked by two disulfide bonds.

It localises to the secreted. In terms of biological role, insulin decreases blood glucose concentration. It increases cell permeability to monosaccharides, amino acids and fatty acids. It accelerates glycolysis, the pentose phosphate cycle, and glycogen synthesis in liver. The polypeptide is Insulin (ins) (Piaractus mesopotamicus (Small-scaled pacu)).